A 98-amino-acid polypeptide reads, in one-letter code: uncharacterized protein (98 aa).

It localises to the cytoplasm. This is an uncharacterized protein from Saccharomyces cerevisiae (strain ATCC 204508 / S288c) (Baker's yeast).